The following is a 506-amino-acid chain: MSVELWQQCVELLRDELPAQQFNTWIRPLQVEAEGDELRVYAPNRFVLDWVNEKYLGRLLELLGENGSGIAPALSLLIGSRRSSAPRAAPNAPVSAAVAASLAQTQAHKTAPAAAVEPVAVAAAEPVLVETSSRDSFDAMAEPAAAPPSGGGRAEQRTVQVEGALKHTSYLNRTFTFDTFVEGKSNQLARAAAWQVADNPKHGYNPLFLYGGVGLGKTHLMHAVGNHLLKKNPNAKVVYLHSERFVADMVKALQLNAINEFKRFYRSVDALLIDDIQFFARKERSQEEFFHTFNALLEGGQQVILTSDRYPKEIEGLEERLKSRFGWGLTVAVEPPELETRVAILMKKADQAKVELPHDAAFFIAQRIRSNVRELEGALKRVIAHSHFMGRDITIELIRESLKDLLALQDKLVSVDNIQRTVAEYYKIKISDLLSKRRSRSVARPRQVAMALSKELTNHSLPEIGDMFGGRDHTTVLHACRKINELKESDADIREDYKNLLRTLTT.

The interval 1-87 (MSVELWQQCV…IGSRRSSAPR (87 aa)) is domain I, interacts with DnaA modulators. The segment at 87–169 (RAAPNAPVSA…QVEGALKHTS (83 aa)) is domain II. The tract at residues 135–154 (DSFDAMAEPAAAPPSGGGRA) is disordered. The segment covering 139–148 (AMAEPAAAPP) has biased composition (low complexity). Residues 170 to 386 (YLNRTFTFDT…GALKRVIAHS (217 aa)) form a domain III, AAA+ region region. Positions 214, 216, 217, and 218 each coordinate ATP. Residues 387 to 506 (HFMGRDITIE…YKNLLRTLTT (120 aa)) form a domain IV, binds dsDNA region.

This sequence belongs to the DnaA family. Oligomerizes as a right-handed, spiral filament on DNA at oriC.

The protein localises to the cytoplasm. Its function is as follows. Plays an essential role in the initiation and regulation of chromosomal replication. ATP-DnaA binds to the origin of replication (oriC) to initiate formation of the DNA replication initiation complex once per cell cycle. Binds the DnaA box (a 9 base pair repeat at the origin) and separates the double-stranded (ds)DNA. Forms a right-handed helical filament on oriC DNA; dsDNA binds to the exterior of the filament while single-stranded (ss)DNA is stabiized in the filament's interior. The ATP-DnaA-oriC complex binds and stabilizes one strand of the AT-rich DNA unwinding element (DUE), permitting loading of DNA polymerase. After initiation quickly degrades to an ADP-DnaA complex that is not apt for DNA replication. Binds acidic phospholipids. Functionally, non-cooperatively binds DnaA boxes in the minimal plasmid RK2 replication origin (oriV). In vitro in the presence of plasmid RK2-derived TrfA and E.coli protein HU, forms an open complex at oriV. This complex was not however competent for formation of a pre-priming complex with E.coli DnaB and DnaC. Broad host range plasmid RK2 requires not only DnaA for replication but also TrfA and host factors. This chain is Chromosomal replication initiator protein DnaA, found in Pseudomonas putida (strain ATCC 47054 / DSM 6125 / CFBP 8728 / NCIMB 11950 / KT2440).